A 155-amino-acid polypeptide reads, in one-letter code: uncharacterized protein (155 aa).

In terms of domain architecture, HTH asnC-type spans isoleucine 4–phenylalanine 65. The segment at residues leucine 23 to glutamate 42 is a DNA-binding region (H-T-H motif).

This is an uncharacterized protein from Pyrococcus furiosus (strain ATCC 43587 / DSM 3638 / JCM 8422 / Vc1).